We begin with the raw amino-acid sequence, 214 residues long: Probable transaldolase (214 aa).

The active-site Schiff-base intermediate with substrate is the Lys-83.

Belongs to the transaldolase family. Type 3B subfamily.

It localises to the cytoplasm. The enzyme catalyses D-sedoheptulose 7-phosphate + D-glyceraldehyde 3-phosphate = D-erythrose 4-phosphate + beta-D-fructose 6-phosphate. It functions in the pathway carbohydrate degradation; pentose phosphate pathway; D-glyceraldehyde 3-phosphate and beta-D-fructose 6-phosphate from D-ribose 5-phosphate and D-xylulose 5-phosphate (non-oxidative stage): step 2/3. Transaldolase is important for the balance of metabolites in the pentose-phosphate pathway. In Desulfatibacillum aliphaticivorans, this protein is Probable transaldolase.